A 396-amino-acid chain; its full sequence is MSGIKKVVLAYSGGLDTSVILKWLAVTYNCEVVTLTADLGQEEDLDGVDDKAMRTGASRAYVEDLQEEFARDFIFPMMRAGAVYEGRYLLGTSIARPLIAKRLVEIARAEGAQAVAHGATGKGNDQVRFELAVNALAPDLRVIAPWREWDLRSRTQLNAFAEEHGIPISSSAKQYSMDRNMLHCSFEGGELEDPWNEPGPNSYVMAVPMEQAPDEAEYISIDFEHGNPVAVNGERLSPAALVKKLNSIGGRHGIGRLDMVENRFVGIKSRGVYETPGGTLIHIAHRDLEGICIDRETMHLRDAMLPRYAAAIYNGFWFAPEREAMQAMIDVSQQRVTGTVRLKLYKGNAWPVGRQSPNTLYCHDLATFEDCATYDHKDAAGFIKLQGLRIRGYKKG.

Residues 10-18 and A37 each bind ATP; that span reads AYSGGLDTS. Residues Y88 and S93 each coordinate L-citrulline. Position 118 (G118) interacts with ATP. L-aspartate contacts are provided by T120, N124, and D125. Residue N124 participates in L-citrulline binding. L-citrulline-binding residues include R128, S176, S185, E261, and Y273.

The protein belongs to the argininosuccinate synthase family. Type 1 subfamily. In terms of assembly, homotetramer.

The protein localises to the cytoplasm. The enzyme catalyses L-citrulline + L-aspartate + ATP = 2-(N(omega)-L-arginino)succinate + AMP + diphosphate + H(+). It participates in amino-acid biosynthesis; L-arginine biosynthesis; L-arginine from L-ornithine and carbamoyl phosphate: step 2/3. This is Argininosuccinate synthase from Nitratidesulfovibrio vulgaris (strain ATCC 29579 / DSM 644 / CCUG 34227 / NCIMB 8303 / VKM B-1760 / Hildenborough) (Desulfovibrio vulgaris).